We begin with the raw amino-acid sequence, 123 residues long: Photosystem II extrinsic protein U (123 aa).

Positions 1–28 are cleaved as a signal peptide; it reads MKTLARILVVFTLIVGLIGFFNPLPAQA.

Belongs to the PsbU family. As to quaternary structure, PSII is composed of 1 copy each of membrane proteins PsbA, PsbB, PsbC, PsbD, PsbE, PsbF, PsbH, PsbI, PsbJ, PsbK, PsbL, PsbM, PsbT, PsbX, PsbY, PsbZ, Psb30/Ycf12, peripheral proteins PsbO, CyanoQ (PsbQ), PsbU, PsbV and a large number of cofactors. It forms dimeric complexes.

The protein localises to the cellular thylakoid membrane. Functionally, one of the extrinsic, lumenal subunits of photosystem II (PSII). PSII is a light-driven water plastoquinone oxidoreductase, using light energy to abstract electrons from H(2)O, generating a proton gradient subsequently used for ATP formation. The extrinsic proteins stabilize the structure of photosystem II oxygen-evolving complex (OEC), the ion environment of oxygen evolution and protect the OEC against heat-induced inactivation. This Gloeothece citriformis (strain PCC 7424) (Cyanothece sp. (strain PCC 7424)) protein is Photosystem II extrinsic protein U.